Consider the following 328-residue polypeptide: 4-hydroxythreonine-4-phosphate dehydrogenase (328 aa).

Residues histidine 134 and threonine 135 each coordinate substrate. The a divalent metal cation site is built by histidine 164, histidine 209, and histidine 265. The substrate site is built by lysine 273, asparagine 282, and arginine 291.

The protein belongs to the PdxA family. As to quaternary structure, homodimer. Requires Zn(2+) as cofactor. It depends on Mg(2+) as a cofactor. Co(2+) serves as cofactor.

Its subcellular location is the cytoplasm. It catalyses the reaction 4-(phosphooxy)-L-threonine + NAD(+) = 3-amino-2-oxopropyl phosphate + CO2 + NADH. Its pathway is cofactor biosynthesis; pyridoxine 5'-phosphate biosynthesis; pyridoxine 5'-phosphate from D-erythrose 4-phosphate: step 4/5. Its function is as follows. Catalyzes the NAD(P)-dependent oxidation of 4-(phosphooxy)-L-threonine (HTP) into 2-amino-3-oxo-4-(phosphooxy)butyric acid which spontaneously decarboxylates to form 3-amino-2-oxopropyl phosphate (AHAP). This is 4-hydroxythreonine-4-phosphate dehydrogenase from Vibrio vulnificus (strain CMCP6).